The sequence spans 339 residues: MVREEIAVATGAPRWKCVESRIDSKRLYYSRFILSPLMKGQADMIGIAMRRALLGEIEGTCITRVKSEKVPHEFSTIVGIEESVHEIVMNLKEIVLRSNLYGTLDASICIRGPRYVTAQDIILPPSVEIVDATQHIANLTERVDLCIKLQIERDRGYSMKTPHNDEDGSYPIDAIFMPVRNANHSVHSYGNGNEKQEILFIEIWTNGSLTPKEALYEASRNLIDLFIPFLHAEEREIHLEDNANGVPLALFTFHDEFAITNIRKNKKKMALKSIFIDQSELPSKTYNCLKKSNIHTLLDLLNNSQEDLLKIEHFCMEDVKRILDILQKHFGFDLPKNGK.

The segment at 1 to 233 is alpha N-terminal domain (alpha-NTD); sequence MVREEIAVAT…DLFIPFLHAE (233 aa). The alpha C-terminal domain (alpha-CTD) stretch occupies residues 267–339; sequence KKMALKSIFI…FGFDLPKNGK (73 aa).

This sequence belongs to the RNA polymerase alpha chain family. In terms of assembly, in plastids the minimal PEP RNA polymerase catalytic core is composed of four subunits: alpha, beta, beta', and beta''. When a (nuclear-encoded) sigma factor is associated with the core the holoenzyme is formed, which can initiate transcription.

It is found in the plastid. The protein resides in the chloroplast. It catalyses the reaction RNA(n) + a ribonucleoside 5'-triphosphate = RNA(n+1) + diphosphate. In terms of biological role, DNA-dependent RNA polymerase catalyzes the transcription of DNA into RNA using the four ribonucleoside triphosphates as substrates. The protein is DNA-directed RNA polymerase subunit alpha of Piper cenocladum (Ant piper).